The primary structure comprises 310 residues: HPr kinase/phosphorylase (310 aa).

Active-site residues include His138 and Lys159. Residue Gly153–Ser160 coordinates ATP. A Mg(2+)-binding site is contributed by Ser160. The active-site Proton acceptor; for phosphorylation activity. Proton donor; for dephosphorylation activity is Asp177. An important for the catalytic mechanism of both phosphorylation and dephosphorylation region spans residues Leu201 to Asn210. A Mg(2+)-binding site is contributed by Glu202. The active site involves Arg243. Positions Pro264–Arg269 are important for the catalytic mechanism of dephosphorylation.

The protein belongs to the HPrK/P family. Homohexamer. The cofactor is Mg(2+).

It carries out the reaction [HPr protein]-L-serine + ATP = [HPr protein]-O-phospho-L-serine + ADP + H(+). The catalysed reaction is [HPr protein]-O-phospho-L-serine + phosphate + H(+) = [HPr protein]-L-serine + diphosphate. Its function is as follows. Catalyzes the ATP- as well as the pyrophosphate-dependent phosphorylation of a specific serine residue in HPr, a phosphocarrier protein of the phosphoenolpyruvate-dependent sugar phosphotransferase system (PTS). HprK/P also catalyzes the pyrophosphate-producing, inorganic phosphate-dependent dephosphorylation (phosphorolysis) of seryl-phosphorylated HPr (P-Ser-HPr). The two antagonistic activities of HprK/P are regulated by several intracellular metabolites, which change their concentration in response to the absence or presence of rapidly metabolisable carbon sources (glucose, fructose, etc.) in the growth medium. Also phosphorylates/dephosphorylates the HPr-like catabolite repression protein crh on a specific serine residue. Therefore, by controlling the phosphorylation state of HPr and crh, HPrK/P is a sensor enzyme that plays a major role in the regulation of carbon metabolism and sugar transport: it mediates carbon catabolite repression (CCR), and regulates PTS-catalyzed carbohydrate uptake and inducer exclusion. The chain is HPr kinase/phosphorylase from Bacillus velezensis (strain DSM 23117 / BGSC 10A6 / LMG 26770 / FZB42) (Bacillus amyloliquefaciens subsp. plantarum).